Reading from the N-terminus, the 156-residue chain is Large ribosomal subunit protein uL15 (156 aa).

The segment at 1–56 (MDLSNLKPAEGATQAGQRLGRGEGSGRGGHSSTRGTKGQSSRSGSGTRPIWFEGGQ) is disordered.

Belongs to the universal ribosomal protein uL15 family. In terms of assembly, part of the 50S ribosomal subunit.

Its function is as follows. Binds to the 23S rRNA. The polypeptide is Large ribosomal subunit protein uL15 (Salinibacter ruber (strain DSM 13855 / M31)).